The chain runs to 255 residues: Vitamin B12 import ATP-binding protein BtuD (255 aa).

Residues 2-240 form the ABC transporter domain; the sequence is MHVKHIALGS…EGLAEVFQTQ (239 aa). An ATP-binding site is contributed by 30-37; the sequence is GPNGSGKS.

This sequence belongs to the ABC transporter superfamily. Vitamin B12 importer (TC 3.A.1.13.1) family. In terms of assembly, the complex is composed of two ATP-binding proteins (BtuD), two transmembrane proteins (BtuC) and a solute-binding protein (BtuF).

The protein localises to the cell inner membrane. The catalysed reaction is an R-cob(III)alamin(out) + ATP + H2O = an R-cob(III)alamin(in) + ADP + phosphate + H(+). Its function is as follows. Part of the ABC transporter complex BtuCDF involved in vitamin B12 import. Responsible for energy coupling to the transport system. This Vibrio campbellii (strain ATCC BAA-1116) protein is Vitamin B12 import ATP-binding protein BtuD.